We begin with the raw amino-acid sequence, 106 residues long: Immunoglobulin lambda constant 3 (106 aa).

In terms of domain architecture, Ig-like spans proline 7–alanine 101. The cysteines at positions 28 and 87 are disulfide-linked.

In terms of assembly, immunoglobulins are composed of two identical heavy chains and two identical light chains; disulfide-linked.

It is found in the secreted. The protein resides in the cell membrane. Functionally, constant region of immunoglobulin light chains. Immunoglobulins, also known as antibodies, are membrane-bound or secreted glycoproteins produced by B lymphocytes. In the recognition phase of humoral immunity, the membrane-bound immunoglobulins serve as receptors which, upon binding of a specific antigen, trigger the clonal expansion and differentiation of B lymphocytes into immunoglobulins-secreting plasma cells. Secreted immunoglobulins mediate the effector phase of humoral immunity, which results in the elimination of bound antigens. The antigen binding site is formed by the variable domain of one heavy chain, together with that of its associated light chain. Thus, each immunoglobulin has two antigen binding sites with remarkable affinity for a particular antigen. The variable domains are assembled by a process called V-(D)-J rearrangement and can then be subjected to somatic hypermutations which, after exposure to antigen and selection, allow affinity maturation for a particular antigen. In Homo sapiens (Human), this protein is Immunoglobulin lambda constant 3.